A 373-amino-acid chain; its full sequence is Probable jasmonic acid carboxyl methyltransferase 1 (373 aa).

Y18 is an S-adenosyl-L-homocysteine binding site. Residue Q25 coordinates jasmonate. Residues C59, N64, D96, L97, S135, and F136 each coordinate S-adenosyl-L-homocysteine. Residues H156 and W157 each contribute to the jasmonate site. 4 residues coordinate Mg(2+): N174, D260, F262, and N263.

The protein belongs to the methyltransferase superfamily. Type-7 methyltransferase family. Mg(2+) is required as a cofactor.

Its subcellular location is the cytoplasm. The protein localises to the nucleus. The enzyme catalyses jasmonate + S-adenosyl-L-methionine = methyl (-)-jasmonate + S-adenosyl-L-homocysteine. It participates in lipid metabolism; oxylipin biosynthesis. In terms of biological role, catalyzes the methylation of jasmonate into methyljasmonate, a plant volatile that acts as an important cellular regulator mediating diverse developmental processes and defense responses. This chain is Probable jasmonic acid carboxyl methyltransferase 1, found in Theobroma cacao (Cacao).